Here is a 585-residue protein sequence, read N- to C-terminus: Parathyroid hormone/parathyroid hormone-related peptide receptor (585 aa).

The signal sequence occupies residues 1–26 (MGAARIAPGLALLLCCPVLSSAYALV). Topologically, residues 27–184 (DADDVMTKEE…REREVFDRLG (158 aa)) are extracellular. Disulfide bonds link Cys-48–Cys-113, Cys-104–Cys-144, and Cys-127–Cys-166. The disordered stretch occupies residues 66 to 100 (DKGWASAPTSGKPRKEKASGKLYPESGEDTGSRHQ). 4 N-linked (GlcNAc...) asparagine glycosylation sites follow: Asn-147, Asn-157, Asn-162, and Asn-172. Residues 185–208 (MIYTVGYSVSLASLTVAVLILAYF) form a helical membrane-spanning segment. Topologically, residues 209–215 (RRLHCTR) are cytoplasmic. The helical transmembrane segment at 216–235 (NYIHMHLFLSFMLRAVSIFV) threads the bilayer. Topologically, residues 236-277 (KDAVLYSGATLDEAERLTEEELRAIAQAPLPPVAATSYVGCR) are extracellular. Residues 278–301 (VAVTFFLYFLATNYYWILVEGLYL) traverse the membrane as a helical segment. Residues 302 to 315 (HSLIFMAFFSEKKY) lie on the Cytoplasmic side of the membrane. The chain crosses the membrane as a helical span at residues 316 to 337 (LWGFTVFGWGLPAIFVAVWVSV). The Extracellular portion of the chain corresponds to 338–356 (RATLANTGCWDLSSGNKKW). The chain crosses the membrane as a helical span at residues 357–377 (IIQVPILASIVLNFILFINIV). Over 378–404 (RVLATKLRETNAGRCDTRQQYRKLLKS) the chain is Cytoplasmic. A helical membrane pass occupies residues 405–423 (TLVLMPLFGVHYIVFMATP). Over 424-435 (YTEVSGTLWQVQ) the chain is Extracellular. The helical transmembrane segment at 436–458 (MHYEMLFNSFQGFFVAIIYCFCN) threads the bilayer. Topologically, residues 459 to 585 (GEVQAEIKKS…LLQEEWETVM (127 aa)) are cytoplasmic. The Important for interaction with G proteins signature appears at 469 to 472 (WSRW). The residue at position 543 (Thr-543) is a Phosphothreonine.

The protein belongs to the G-protein coupled receptor 2 family. In terms of assembly, homodimer in the absence of bound ligand. Peptide hormone binding leads to dissociation of the homodimer. Post-translationally, N-glycosylated.

Its subcellular location is the cell membrane. G-protein-coupled receptor for parathyroid hormone (PTH) and for parathyroid hormone-related peptide (PTHLH). Ligand binding causes a conformation change that triggers signaling via guanine nucleotide-binding proteins (G proteins) and modulates the activity of downstream effectors, such as adenylate cyclase (cAMP). PTH1R is coupled to G(s) G alpha proteins and mediates activation of adenylate cyclase activity. PTHLH dissociates from PTH1R more rapidly than PTH; as consequence, the cAMP response induced by PTHLH decays faster than the response induced by PTH. In Sus scrofa (Pig), this protein is Parathyroid hormone/parathyroid hormone-related peptide receptor (PTH1R).